Here is an 874-residue protein sequence, read N- to C-terminus: Ribosome biogenesis protein ERB1 (874 aa).

The tract at residues 1–148 (MAKKEVSASK…DAFAAADAAT (148 aa)) is disordered. Over residues 27-41 (QAVEKEEAEKEKEEG) the composition is skewed to basic and acidic residues. Positions 55–77 (PESDSDDEGAAAAEEEEEEEEQQ) are enriched in acidic residues. The span at 78–89 (QDVKELDLDKGE) shows a compositional bias: basic and acidic residues. 2 stretches are compositionally biased toward acidic residues: residues 95–104 (SDAEDFDSEE) and 128–139 (PKEDGDEQDEQD). The tract at residues 312–429 (RFVPSKHEAK…LRLVPGYQDS (118 aa)) is required for interaction with NOP7. A required for interaction with YTM1 region spans residues 429-465 (SVRERFERSLDLYLAPRLRKNKLNIDPESLIPELPSP). 2 WD repeats span residues 481 to 520 (GHTG…QVFK) and 529 to 569 (NGED…FEIE). Over residues 593–602 (KVKGEDTKGD) the composition is skewed to basic and acidic residues. The segment at 593-640 (KVKGEDTKGDLDDDEEEEEEEEDDDDDEGQGKVKAHNSTAPAKKDVAK) is disordered. Residues 603–620 (LDDDEEEEEEEEDDDDDE) show a composition bias toward acidic residues. WD repeat units lie at residues 658–700 (QCRR…SQSP), 703–741 (KSKG…LLKK), 744–783 (PGVR…TPYK), 787–827 (YHEK…DLMT), and 843–874 (INQI…LWTT).

The protein belongs to the WD repeat BOP1/ERB1 family. As to quaternary structure, component of the NOP7 complex, composed of ERB1, NOP7 and YTM1. The complex is held together by ERB1, which interacts with NOP7 via its N-terminal domain and with YTM1 via a high-affinity interaction between the seven-bladed beta-propeller domains of the 2 proteins. The NOP7 complex associates with the 66S pre-ribosome.

It is found in the nucleus. Its subcellular location is the nucleolus. The protein resides in the nucleoplasm. Its function is as follows. Component of the NOP7 complex, which is required for maturation of the 25S and 5.8S ribosomal RNAs and formation of the 60S ribosome. This chain is Ribosome biogenesis protein ERB1, found in Lodderomyces elongisporus (strain ATCC 11503 / CBS 2605 / JCM 1781 / NBRC 1676 / NRRL YB-4239) (Yeast).